The chain runs to 178 residues: MATVDPIRYPIGTFQAPQQFEAGEVQEWIAAIRGLPSDLRTAVSGLNDEQLNTPYREGGWTVAQVVHHLADASMNAFLRTKWGVTEDGPTVKPFAESEWAKTADACLLPIEPSLLLLDGLHARWAALLESMTEADFHRTVRPEGAAGEMPLYVLTALYAWHGKHHTAQVASLRKRKGW.

Zn(2+)-binding residues include His-68, His-161, and His-165.

It belongs to the metal hydrolase YfiT family. Homodimer. The cofactor is Zn(2+).

It is found in the cytoplasm. Its function is as follows. Possible metal-dependent hydrolase. The chain is Putative metal-dependent hydrolase GK0616 from Geobacillus kaustophilus (strain HTA426).